The chain runs to 315 residues: NAD(P)H-dependent anabolic L-arginine dehydrogenase DauB (315 aa).

The protein belongs to the ornithine cyclodeaminase/mu-crystallin family.

The catalysed reaction is L-arginine + NAD(+) + H2O = 5-guanidino-2-oxopentanoate + NH4(+) + NADH + H(+). The enzyme catalyses L-arginine + NADP(+) + H2O = 5-guanidino-2-oxopentanoate + NH4(+) + NADPH + H(+). Its function is as follows. Involved in the anabolism of D-lysine and D-arginine. Under aerobic conditions, the arginine succinyltransferase (AST) and arginine transaminase (ATA) pathways are 2 major routes for L-arginine utilization as the sole source of carbon and nitrogen. The D-to-L racemization of arginine by DauA and DauB is necessary, before to be channeled into the AST and/or ATA pathways. DauB catalyzes the synthesis of L-arginine from 2-ketoarginine (2-KA) and ammonium. The sequence is that of NAD(P)H-dependent anabolic L-arginine dehydrogenase DauB from Pseudomonas aeruginosa (strain ATCC 15692 / DSM 22644 / CIP 104116 / JCM 14847 / LMG 12228 / 1C / PRS 101 / PAO1).